A 221-amino-acid chain; its full sequence is Vesicle-associated membrane protein 714 (221 aa).

N-acetylalanine is present on A2. Residues 2–190 (AIVYAVVARG…RRALWMKNAK (189 aa)) are Cytoplasmic-facing. Residues 7–112 (VVARGTVVLA…AMNDEFSRVL (106 aa)) enclose the Longin domain. Residues 127 to 187 (TLNRVRGEVS…KRLRRALWMK (61 aa)) enclose the v-SNARE coiled-coil homology domain. The helical; Anchor for type IV membrane protein transmembrane segment at 191–211 (LLVLLTCLIVFLLYIIIASFC) threads the bilayer. Topologically, residues 212–221 (GGITLPSCRS) are vesicular.

Belongs to the synaptobrevin family. In terms of tissue distribution, highly expressed in leaves, stems and roots. Detected in flowers.

The protein resides in the golgi apparatus membrane. Its function is as follows. Involved in the targeting and/or fusion of transport vesicles to their target membrane. The chain is Vesicle-associated membrane protein 714 from Arabidopsis thaliana (Mouse-ear cress).